A 96-amino-acid chain; its full sequence is Protein RnfH (96 aa).

The protein belongs to the UPF0125 (RnfH) family.

This chain is Protein RnfH, found in Pectobacterium carotovorum subsp. carotovorum (strain PC1).